We begin with the raw amino-acid sequence, 166 residues long: Protein-export protein SecB (166 aa).

This sequence belongs to the SecB family. In terms of assembly, homotetramer, a dimer of dimers. One homotetramer interacts with 1 SecA dimer.

The protein resides in the cytoplasm. Functionally, one of the proteins required for the normal export of preproteins out of the cell cytoplasm. It is a molecular chaperone that binds to a subset of precursor proteins, maintaining them in a translocation-competent state. It also specifically binds to its receptor SecA. The protein is Protein-export protein SecB of Cereibacter sphaeroides (strain ATCC 17029 / ATH 2.4.9) (Rhodobacter sphaeroides).